Here is a 369-residue protein sequence, read N- to C-terminus: Maltose/maltodextrin import ATP-binding protein MalK (369 aa).

Residues 4–234 (VTLRNVCKSY…PKNRFVAGFI (231 aa)) form the ABC transporter domain. Residue 36 to 43 (GPSGCGKS) coordinates ATP.

It belongs to the ABC transporter superfamily. Maltooligosaccharide importer (TC 3.A.1.1.1) family. In terms of assembly, the complex is composed of two ATP-binding proteins (MalK), two transmembrane proteins (MalG and MalK) and a solute-binding protein (MalE).

The protein localises to the cell inner membrane. It carries out the reaction D-maltose(out) + ATP + H2O = D-maltose(in) + ADP + phosphate + H(+). Functionally, part of the ABC transporter complex MalEFGK involved in maltose/maltodextrin import. Responsible for energy coupling to the transport system. The polypeptide is Maltose/maltodextrin import ATP-binding protein MalK (Aliivibrio fischeri (strain ATCC 700601 / ES114) (Vibrio fischeri)).